A 223-amino-acid polypeptide reads, in one-letter code: Cytidylate kinase (223 aa).

An ATP-binding site is contributed by 13–21 (GPSASGKGT).

Belongs to the cytidylate kinase family. Type 1 subfamily.

The protein resides in the cytoplasm. It carries out the reaction CMP + ATP = CDP + ADP. It catalyses the reaction dCMP + ATP = dCDP + ADP. The sequence is that of Cytidylate kinase from Nitrosomonas europaea (strain ATCC 19718 / CIP 103999 / KCTC 2705 / NBRC 14298).